The primary structure comprises 109 residues: Ribonuclease P protein component 4 (109 aa).

4 residues coordinate Zn(2+): Cys65, Cys68, Cys94, and Cys97.

It belongs to the eukaryotic/archaeal RNase P protein component 4 family. In terms of assembly, consists of a catalytic RNA component and at least 4-5 protein subunits. Zn(2+) is required as a cofactor.

It is found in the cytoplasm. It carries out the reaction Endonucleolytic cleavage of RNA, removing 5'-extranucleotides from tRNA precursor.. Functionally, part of ribonuclease P, a protein complex that generates mature tRNA molecules by cleaving their 5'-ends. This is Ribonuclease P protein component 4 from Methanococcus vannielii (strain ATCC 35089 / DSM 1224 / JCM 13029 / OCM 148 / SB).